Here is a 387-residue protein sequence, read N- to C-terminus: Putative purine permease 15 (387 aa).

The next 10 helical transmembrane spans lie at 44 to 64, 84 to 104, 122 to 142, 150 to 169, 179 to 199, 210 to 230, 252 to 272, 306 to 326, 329 to 349, and 354 to 374; these read WVTIIICTILAVTGQCIARLL, TLLQVVGFPILLLPFLLHFLI, LAITYSILCIYMFCQAFFSDV, VFTLTYTTQLLFTLIFSKYY, FISLILAVLAGAFTLYTFSAG, YGIINVAFGAAIFFSLLLCII, FVVVLEMIIFLSLVVTIILVA, VAWQIYWVGIVGLVFAVSAVF, VISVCTWPIVSLLVAFLYNTH, and VFRGIALGAAALSVSCYIYII.

It belongs to the purine permeases (TC 2.A.7.14) family.

It is found in the membrane. This Arabidopsis thaliana (Mouse-ear cress) protein is Putative purine permease 15 (PUP15).